The following is a 318-amino-acid chain: Small ribosomal subunit protein uS2 (318 aa).

It belongs to the universal ribosomal protein uS2 family.

This is Small ribosomal subunit protein uS2 from Mesomycoplasma hyopneumoniae (strain J / ATCC 25934 / NCTC 10110) (Mycoplasma hyopneumoniae).